The primary structure comprises 105 residues: Phosphoribosyl-ATP pyrophosphatase (105 aa).

This sequence belongs to the PRA-PH family.

It is found in the cytoplasm. It catalyses the reaction 1-(5-phospho-beta-D-ribosyl)-ATP + H2O = 1-(5-phospho-beta-D-ribosyl)-5'-AMP + diphosphate + H(+). It participates in amino-acid biosynthesis; L-histidine biosynthesis; L-histidine from 5-phospho-alpha-D-ribose 1-diphosphate: step 2/9. The polypeptide is Phosphoribosyl-ATP pyrophosphatase (Ruegeria pomeroyi (strain ATCC 700808 / DSM 15171 / DSS-3) (Silicibacter pomeroyi)).